A 138-amino-acid polypeptide reads, in one-letter code: Small ribosomal subunit protein uS11c (138 aa).

Residues 1–23 (MAKPIPRIGSRKNGRIGSRKSGR) form a disordered region. Residues 9 to 23 (GSRKNGRIGSRKSGR) show a composition bias toward basic residues.

This sequence belongs to the universal ribosomal protein uS11 family. As to quaternary structure, part of the 30S ribosomal subunit.

The protein resides in the plastid. It localises to the chloroplast. The polypeptide is Small ribosomal subunit protein uS11c (Buxus microphylla (Littleleaf boxwood)).